We begin with the raw amino-acid sequence, 308 residues long: Glycine--tRNA ligase alpha subunit (308 aa).

It belongs to the class-II aminoacyl-tRNA synthetase family. Tetramer of two alpha and two beta subunits.

The protein resides in the cytoplasm. The catalysed reaction is tRNA(Gly) + glycine + ATP = glycyl-tRNA(Gly) + AMP + diphosphate. The chain is Glycine--tRNA ligase alpha subunit from Polaromonas naphthalenivorans (strain CJ2).